The sequence spans 208 residues: Small ribosomal subunit protein uS4 (208 aa).

In terms of domain architecture, S4 RNA-binding spans 95-157; that stretch reads RRIDNIVYRA…DSLKKLIRSN (63 aa).

It belongs to the universal ribosomal protein uS4 family. As to quaternary structure, part of the 30S ribosomal subunit. Contacts protein S5. The interaction surface between S4 and S5 is involved in control of translational fidelity.

Functionally, one of the primary rRNA binding proteins, it binds directly to 16S rRNA where it nucleates assembly of the body of the 30S subunit. With S5 and S12 plays an important role in translational accuracy. The chain is Small ribosomal subunit protein uS4 from Borrelia garinii subsp. bavariensis (strain ATCC BAA-2496 / DSM 23469 / PBi) (Borreliella bavariensis).